The chain runs to 269 residues: Zinc transporter ZupT (269 aa).

Transmembrane regions (helical) follow at residues 12-32 (AFSI…LVMF), 41-61 (LSFG…TEIF), 75-95 (DHAF…IALI), 126-146 (MMAA…TFFA), 152-172 (AVGM…GISI), 187-207 (VWAC…GYLV), 211-231 (FLSP…MVFL), and 249-269 (TVYG…LFHF). Residues Asn136 and Glu139 each contribute to the Fe(2+) site. Residues Glu139 and His164 each coordinate Zn(2+). Asn165, Glu168, and Glu197 together coordinate Fe(2+). Position 168 (Glu168) interacts with Zn(2+).

It belongs to the ZIP transporter (TC 2.A.5) family. ZupT subfamily.

The protein localises to the cell inner membrane. The enzyme catalyses Zn(2+)(in) = Zn(2+)(out). Its function is as follows. Mediates zinc uptake. May also transport other divalent cations. This is Zinc transporter ZupT from Neisseria meningitidis serogroup A / serotype 4A (strain DSM 15465 / Z2491).